The following is a 310-amino-acid chain: Vomeronasal type-1 receptor 53 (310 aa).

At 1 to 20 the chain is on the extracellular side; that stretch reads MNKANLLHTDINLKITLFSE. Residues 21–41 traverse the membrane as a helical segment; the sequence is VSVGISANSILIFAHLCMLLG. Residues 42-50 are Cytoplasmic-facing; the sequence is ENRPKPIDL. A helical membrane pass occupies residues 51–71; the sequence is YIAFFSLTQLMLLITMGLIAV. At 72–93 the chain is on the extracellular side; the sequence is DMFMPWGRWDSTTCQSLIYLHR. Residues cysteine 85 and cysteine 172 are joined by a disulfide bond. Residues 94–114 form a helical membrane-spanning segment; the sequence is LLRGLTLSATCLLNVLWTITL. The Cytoplasmic segment spans residues 115–134; that stretch reads SPRSSCLTKFKHKSLQHISC. The chain crosses the membrane as a helical span at residues 135–155; it reads AFLFLCVLYMSFNSHLFISII. At 156-183 the chain is on the extracellular side; it reads AYPNLTLENFMYVTQSCSLIPLSYFRKS. Residue asparagine 159 is glycosylated (N-linked (GlcNAc...) asparagine). Residues 184–204 traverse the membrane as a helical segment; the sequence is MFSIPMAIREALLIGLMALSG. Over 205-238 the chain is Cytoplasmic; sequence GYMVAHLWRHKKQAQHLHRTSLSSKASPEQRATR. Residues 239-259 form a helical membrane-spanning segment; it reads TIMLLMSFFVVLYILDLVIFH. Topologically, residues 260–268 are extracellular; it reads SRMKFKDGS. The chain crosses the membrane as a helical span at residues 269-289; that stretch reads ILYGVQIIVSHSYATVSPFVF. At 290 to 310 the chain is on the cytoplasmic side; the sequence is ICTEKRITNFLRSMCGRIVNI.

The protein belongs to the G-protein coupled receptor 1 family.

It localises to the cell membrane. In terms of biological role, putative pheromone receptor implicated in the regulation of social and reproductive behavior. In Mus musculus (Mouse), this protein is Vomeronasal type-1 receptor 53 (Vmn1r53).